Reading from the N-terminus, the 428-residue chain is Adenylosuccinate synthetase (428 aa).

GTP is bound by residues 12–18 (GDEGKGK) and 40–42 (GHS). Asp-13 acts as the Proton acceptor in catalysis. Mg(2+) contacts are provided by Asp-13 and Gly-40. Residues 13–16 (DEGK), 38–41 (NAGH), Thr-128, Arg-142, Gln-223, Thr-238, and Arg-302 contribute to the IMP site. Catalysis depends on His-41, which acts as the Proton donor. 298–304 (VTTGRPR) provides a ligand contact to substrate. Residues Arg-304, 330–332 (KLD), and 412–414 (GTG) contribute to the GTP site.

The protein belongs to the adenylosuccinate synthetase family. In terms of assembly, homodimer. Requires Mg(2+) as cofactor.

It is found in the cytoplasm. The enzyme catalyses IMP + L-aspartate + GTP = N(6)-(1,2-dicarboxyethyl)-AMP + GDP + phosphate + 2 H(+). Its pathway is purine metabolism; AMP biosynthesis via de novo pathway; AMP from IMP: step 1/2. Functionally, plays an important role in the de novo pathway of purine nucleotide biosynthesis. Catalyzes the first committed step in the biosynthesis of AMP from IMP. In Bifidobacterium longum (strain DJO10A), this protein is Adenylosuccinate synthetase.